Reading from the N-terminus, the 195-residue chain is Phosphoheptose isomerase (195 aa).

The 161-residue stretch at 35–195 (IVSKILQAGN…IVEYNLFKME (161 aa)) folds into the SIS domain. 51 to 53 (NGG) is a substrate binding site. Residues histidine 60 and glutamate 64 each coordinate Zn(2+). Residues glutamate 64, 95–96 (ND), 121–123 (STS), serine 126, and glutamine 173 each bind substrate. The Zn(2+) site is built by glutamine 173 and histidine 181.

Belongs to the SIS family. GmhA subfamily. Requires Zn(2+) as cofactor.

Its subcellular location is the cytoplasm. The catalysed reaction is 2 D-sedoheptulose 7-phosphate = D-glycero-alpha-D-manno-heptose 7-phosphate + D-glycero-beta-D-manno-heptose 7-phosphate. It functions in the pathway carbohydrate biosynthesis; D-glycero-D-manno-heptose 7-phosphate biosynthesis; D-glycero-alpha-D-manno-heptose 7-phosphate and D-glycero-beta-D-manno-heptose 7-phosphate from sedoheptulose 7-phosphate: step 1/1. Functionally, catalyzes the isomerization of sedoheptulose 7-phosphate in D-glycero-D-manno-heptose 7-phosphate. In Leptospira interrogans serogroup Icterohaemorrhagiae serovar copenhageni (strain Fiocruz L1-130), this protein is Phosphoheptose isomerase.